Here is a 100-residue protein sequence, read N- to C-terminus: uncharacterized protein (100 aa).

Positions 40 to 100 (GDQMARKATS…DPTKNKSGRG (61 aa)) are disordered.

This is an uncharacterized protein from Mycobacterium tuberculosis (strain ATCC 25618 / H37Rv).